Consider the following 689-residue polypeptide: Glycine--tRNA ligase beta subunit (689 aa).

This sequence belongs to the class-II aminoacyl-tRNA synthetase family. Tetramer of two alpha and two beta subunits.

It localises to the cytoplasm. It catalyses the reaction tRNA(Gly) + glycine + ATP = glycyl-tRNA(Gly) + AMP + diphosphate. The chain is Glycine--tRNA ligase beta subunit from Shewanella baltica (strain OS155 / ATCC BAA-1091).